We begin with the raw amino-acid sequence, 251 residues long: Ubiquinone/menaquinone biosynthesis C-methyltransferase UbiE (251 aa).

Residues Thr-74, Asp-95, and 123 to 124 (NA) contribute to the S-adenosyl-L-methionine site.

It belongs to the class I-like SAM-binding methyltransferase superfamily. MenG/UbiE family.

It catalyses the reaction a 2-demethylmenaquinol + S-adenosyl-L-methionine = a menaquinol + S-adenosyl-L-homocysteine + H(+). The catalysed reaction is a 2-methoxy-6-(all-trans-polyprenyl)benzene-1,4-diol + S-adenosyl-L-methionine = a 5-methoxy-2-methyl-3-(all-trans-polyprenyl)benzene-1,4-diol + S-adenosyl-L-homocysteine + H(+). It functions in the pathway quinol/quinone metabolism; menaquinone biosynthesis; menaquinol from 1,4-dihydroxy-2-naphthoate: step 2/2. Its pathway is cofactor biosynthesis; ubiquinone biosynthesis. In terms of biological role, methyltransferase required for the conversion of demethylmenaquinol (DMKH2) to menaquinol (MKH2) and the conversion of 2-polyprenyl-6-methoxy-1,4-benzoquinol (DDMQH2) to 2-polyprenyl-3-methyl-6-methoxy-1,4-benzoquinol (DMQH2). This chain is Ubiquinone/menaquinone biosynthesis C-methyltransferase UbiE, found in Erwinia tasmaniensis (strain DSM 17950 / CFBP 7177 / CIP 109463 / NCPPB 4357 / Et1/99).